A 182-amino-acid polypeptide reads, in one-letter code: Homeobox expressed in ES cells 1-A (182 aa).

The segment at residues 103-163 (YRGRRPRTAF…QNRRAKLKRS (61 aa)) is a DNA-binding region (homeobox).

The protein belongs to the ANF homeobox family. In terms of tissue distribution, initially expressed in the anterior dorsal region of early embryos and later exclusively in the primordium of the anterior pituitary gland.

It localises to the nucleus. In terms of biological role, appears to be involved in the regional specification of the anterior head of Xenopus embryos. This Xenopus laevis (African clawed frog) protein is Homeobox expressed in ES cells 1-A (hesx1-a).